A 251-amino-acid chain; its full sequence is MVRRRVIPCLLLKDRGLVKTVKFKEPKYVGDPINAIRIFNEKEVDELILLDIDASRLNQEPNYELIAEVAGECFMPICYGGGIKTLEHAEKIFSLGVEKVSINTAALMDLSLIRRIADKFGSQSVVGSIDCRKGFWGGHSVFSENGTRDMKRSPLEWAQALEEAGVGEIFLNSIDRDGVQKGFDNALVENIASNVHVPVIACGGAGSIADLIDLFERTCVSAVAAGSLFVFHGKHRAVLISYPDVNKLDVG.

Asp-130 is a catalytic residue.

Belongs to the HisA/HisF family. As to quaternary structure, heterodimer of HisH and HisF.

It is found in the cytoplasm. It catalyses the reaction 5-[(5-phospho-1-deoxy-D-ribulos-1-ylimino)methylamino]-1-(5-phospho-beta-D-ribosyl)imidazole-4-carboxamide + L-glutamine = D-erythro-1-(imidazol-4-yl)glycerol 3-phosphate + 5-amino-1-(5-phospho-beta-D-ribosyl)imidazole-4-carboxamide + L-glutamate + H(+). It participates in amino-acid biosynthesis; L-histidine biosynthesis; L-histidine from 5-phospho-alpha-D-ribose 1-diphosphate: step 5/9. IGPS catalyzes the conversion of PRFAR and glutamine to IGP, AICAR and glutamate. The HisF subunit catalyzes the cyclization activity that produces IGP and AICAR from PRFAR using the ammonia provided by the HisH subunit. In Pseudomonas aeruginosa (strain ATCC 15692 / DSM 22644 / CIP 104116 / JCM 14847 / LMG 12228 / 1C / PRS 101 / PAO1), this protein is Putative imidazole glycerol phosphate synthase subunit hisF2 (hisF2).